Consider the following 388-residue polypeptide: Glucose-6-phosphate/phosphate translocator 1, chloroplastic (388 aa).

The N-terminal 65 residues, 1–65, are a transit peptide targeting the chloroplast; that stretch reads MVLSVKQTLS…LRAKSPVVRC (65 aa). 8 helical membrane passes run 95–115, 129–149, 158–178, 211–231, 233–253, 273–293, 305–325, and 363–383; these read LKIG…NIYN, STLS…VGIV, FWKT…AATV, FPTS…LSAL, ELNF…AFVF, YACL…AVEG, LATV…FYHL, and TPVQ…TFLY. The EamA domain occupies 112 to 229; it reads NIYNKKVLNA…IPIIGGCALS (118 aa).

Belongs to the TPT transporter family. GPT (TC 2.A.7.9) subfamily. In terms of tissue distribution, expressed in seeds, flowers, rosette leaves, and roots, with highest levels found in stamens. Found in the root cap, in guard cells and in mesophyll cells.

It localises to the plastid. It is found in the chloroplast membrane. The protein localises to the endoplasmic reticulum membrane. Its subcellular location is the peroxisome membrane. Its function is as follows. Glucose 6-phosphate (Glc6P) transporter. Also transports inorganic phosphate, 3-phosphoglycerate, triose phosphates and, to a leser extent, phosphoenolpyruvate. Responsible for the transport of Glc6P into plastids of heterotrophic tissues where it can be used as a carbon source for starch biosynthesis, as substrate for fatty acid biosynthesis or as substrate for NADPH generation via the oxidative pentose phosphate pathway (OPPP). Required for pollen maturation and embryo sac development. Preferentially exchanges Glc6P for ribulose-5-phosphate (Ru5P) in reconstituted yeast proteoliposomes. May supply the substrate (Glc6P) for OPPP reactions inside peroxisomes and exchange it with the product Ru5P which leaves the organelle. The polypeptide is Glucose-6-phosphate/phosphate translocator 1, chloroplastic (Arabidopsis thaliana (Mouse-ear cress)).